Here is a 386-residue protein sequence, read N- to C-terminus: Alpha-D-kanosaminyltransferase (386 aa).

Belongs to the glycosyltransferase group 1 family.

The catalysed reaction is 2'-deamino-2'-hydroxyneamine + UDP-alpha-D-kanosamine = kanamycin A + UDP + H(+). It carries out the reaction neamine + UDP-alpha-D-kanosamine = kanamycin B + UDP + H(+). The enzyme catalyses paromamine + UDP-alpha-D-kanosamine = kanamycin C + UDP + H(+). It catalyses the reaction 2'-deamino-2'-hydroxyparomamine + UDP-alpha-D-kanosamine = kanamycin X + UDP + H(+). It functions in the pathway antibiotic biosynthesis; kanamycin biosynthesis. Functionally, glycosyltransferase involved in the biosynthesis of kanamycins by catalyzing the transfer of the hexose kanosamine from UDP-alpha-D-kanosamine to disaccharide precursors. Can also use UDP-alpha-D-glucose as sugar donor with much lower efficiency. The polypeptide is Alpha-D-kanosaminyltransferase (kanE) (Streptomyces kanamyceticus).